Reading from the N-terminus, the 38-residue chain is Photosystem II reaction center protein L (38 aa).

A helical membrane pass occupies residues 17–37 (SLYWGLLLIFVLAVLFSNYFF).

It belongs to the PsbL family. In terms of assembly, PSII is composed of 1 copy each of membrane proteins PsbA, PsbB, PsbC, PsbD, PsbE, PsbF, PsbH, PsbI, PsbJ, PsbK, PsbL, PsbM, PsbT, PsbX, PsbY, PsbZ, Psb30/Ycf12, at least 3 peripheral proteins of the oxygen-evolving complex and a large number of cofactors. It forms dimeric complexes.

Its subcellular location is the plastid. It localises to the chloroplast thylakoid membrane. Its function is as follows. One of the components of the core complex of photosystem II (PSII). PSII is a light-driven water:plastoquinone oxidoreductase that uses light energy to abstract electrons from H(2)O, generating O(2) and a proton gradient subsequently used for ATP formation. It consists of a core antenna complex that captures photons, and an electron transfer chain that converts photonic excitation into a charge separation. This subunit is found at the monomer-monomer interface and is required for correct PSII assembly and/or dimerization. This chain is Photosystem II reaction center protein L, found in Angiopteris evecta (Mule's foot fern).